A 95-amino-acid chain; its full sequence is Histone-like DNA-binding protein (95 aa).

Belongs to the bacterial histone-like protein family.

This chain is Histone-like DNA-binding protein, found in Rickettsia montanensis.